The sequence spans 367 residues: MTLQRTPLHQLCQDGGGRMVPFAGWEMPVQFSGLIQEHKAVREQVGMFDISHMGVLRLEGPNPKDALQQLVPSDLHRIGPGEACYTVLLNESGGIRDDLIVYDCGAVDAERGALVLVINAACAEADTAWIRDQMEPAGLTVSDLKAGGVLLALQGPQSIPLLEELSGESLSDLPRFGHRTLSLKDIAHPVFTGRTGYTGEDGAELLLTAADGQKLWQILLDRGVSPCGLGARDTLRLEAAMHLYGMDMNAETTPFEAGLGWLVHLEMPVDFVGRQALEQAAESGPTKRLVGLKLQGRAIARHDYPVLHNGETVGVVTSGTWSPTLEEPIALAYVPTALAKLGAELSVEIRGKAQPACVVKRPFYRRS.

Belongs to the GcvT family. As to quaternary structure, the glycine cleavage system is composed of four proteins: P, T, L and H.

The catalysed reaction is N(6)-[(R)-S(8)-aminomethyldihydrolipoyl]-L-lysyl-[protein] + (6S)-5,6,7,8-tetrahydrofolate = N(6)-[(R)-dihydrolipoyl]-L-lysyl-[protein] + (6R)-5,10-methylene-5,6,7,8-tetrahydrofolate + NH4(+). Functionally, the glycine cleavage system catalyzes the degradation of glycine. The chain is Aminomethyltransferase from Parasynechococcus marenigrum (strain WH8102).